The primary structure comprises 106 residues: Nucleoid-associated protein XAC1110 (106 aa).

Positions 80–89 are enriched in basic and acidic residues; that stretch reads KIDAESKDRM. The disordered stretch occupies residues 80-106; it reads KIDAESKDRMGSATAGMQLPPGMKLPF.

The protein belongs to the YbaB/EbfC family. As to quaternary structure, homodimer.

It localises to the cytoplasm. Its subcellular location is the nucleoid. In terms of biological role, binds to DNA and alters its conformation. May be involved in regulation of gene expression, nucleoid organization and DNA protection. This is Nucleoid-associated protein XAC1110 from Xanthomonas axonopodis pv. citri (strain 306).